A 614-amino-acid polypeptide reads, in one-letter code: Protein NRT1/ PTR FAMILY 7.3 (614 aa).

The next 2 helical transmembrane spans lie at 41–61 (WVAG…FFGV) and 87–107 (WTGT…SYWG). Thr111 carries the post-translational modification Phosphothreonine. 9 consecutive transmembrane segments (helical) span residues 114–134 (IFQV…YMFL), 152–172 (MMEI…YGGY), 196–216 (IAFF…SNTI), 226–246 (WALG…LFLV), 355–375 (PIWL…SLFV), 390–410 (IPPA…IFLY), 435–455 (MGIG…VECY), 515–535 (LCMM…TMVV), and 559–579 (FYFL…ACAK). The disordered stretch occupies residues 592–614 (MQDMSDDDYDTESEEEREKDSKV). Positions 593 to 606 (QDMSDDDYDTESEE) are enriched in acidic residues.

This sequence belongs to the major facilitator superfamily. Proton-dependent oligopeptide transporter (POT/PTR) (TC 2.A.17) family. High expression in roots. Barely detected in shoots. Expressed in root pericycle cells close to the xylem.

The protein resides in the cell membrane. Functionally, low-affinity proton-dependent bidirectional nitrate transporter. Involved in nitrate loading into xylem and not in nitrate uptake. Not involved in histidine or dipeptides transport. The chain is Protein NRT1/ PTR FAMILY 7.3 (NPF7.3) from Arabidopsis thaliana (Mouse-ear cress).